Consider the following 141-residue polypeptide: Photosystem I reaction center subunit IV A, chloroplastic (141 aa).

The transit peptide at 1-49 (MASCNMASAASNFLVATPNVASNTNTSRTTMLFFSSKNYGSTAPRLVVR) directs the protein to the chloroplast. Over residues 57-73 (PAAAATAEPAEAPVKAA) the composition is skewed to low complexity. The segment at 57–83 (PAAAATAEPAEAPVKAAKPPPIGPKRG) is disordered.

This sequence belongs to the PsaE family. In terms of processing, 2 isoforms exists (ratio 1:1). With or without the N-terminal alanine.

It localises to the plastid. The protein localises to the chloroplast thylakoid membrane. In terms of biological role, stabilizes the interaction between PsaC and the PSI core, assists the docking of the ferredoxin to PSI and interacts with ferredoxin-NADP oxidoreductase. This is Photosystem I reaction center subunit IV A, chloroplastic (PSAEA) from Nicotiana sylvestris (Wood tobacco).